We begin with the raw amino-acid sequence, 244 residues long: Biosynthetic peptidoglycan transglycosylase (244 aa).

Residues 25 to 45 (LLLLLAIALLYQSWFLLHIIY) form a helical membrane-spanning segment.

The protein belongs to the glycosyltransferase 51 family.

It is found in the cell inner membrane. It carries out the reaction [GlcNAc-(1-&gt;4)-Mur2Ac(oyl-L-Ala-gamma-D-Glu-L-Lys-D-Ala-D-Ala)](n)-di-trans,octa-cis-undecaprenyl diphosphate + beta-D-GlcNAc-(1-&gt;4)-Mur2Ac(oyl-L-Ala-gamma-D-Glu-L-Lys-D-Ala-D-Ala)-di-trans,octa-cis-undecaprenyl diphosphate = [GlcNAc-(1-&gt;4)-Mur2Ac(oyl-L-Ala-gamma-D-Glu-L-Lys-D-Ala-D-Ala)](n+1)-di-trans,octa-cis-undecaprenyl diphosphate + di-trans,octa-cis-undecaprenyl diphosphate + H(+). The protein operates within cell wall biogenesis; peptidoglycan biosynthesis. Peptidoglycan polymerase that catalyzes glycan chain elongation from lipid-linked precursors. The sequence is that of Biosynthetic peptidoglycan transglycosylase from Nitrosomonas eutropha (strain DSM 101675 / C91 / Nm57).